The following is a 227-amino-acid chain: Large ribosomal subunit protein uL3 (227 aa).

The interval 129 to 154 is disordered; it reads GMQPVSHGQSDRTRSRGSSGAQGPQK.

The protein belongs to the universal ribosomal protein uL3 family. As to quaternary structure, part of the 50S ribosomal subunit. Forms a cluster with proteins L14 and L19.

In terms of biological role, one of the primary rRNA binding proteins, it binds directly near the 3'-end of the 23S rRNA, where it nucleates assembly of the 50S subunit. The chain is Large ribosomal subunit protein uL3 from Endomicrobium trichonymphae.